The chain runs to 399 residues: Lysosomal acid lipase/cholesteryl ester hydrolase (399 aa).

Residues 1-27 form the signal peptide; the sequence is MKMRFLGLVVCLVLWTLHSEGSGGKLT. The propeptide at 28-76 is removed in mature form; it reads AVDPETNMNVSEIISYWGFPSEEYLVETEDGYILCLNRIPHGRKNHSDK. N-linked (GlcNAc...) asparagine glycosylation is found at N36, N72, N101, and N161. The 301-residue stretch at 80-380 folds into the AB hydrolase-1 domain; sequence PVVFLQHGLL…EWEHLDFIWG (301 aa). S174 serves as the catalytic Charge relay system. N-linked (GlcNAc...) asparagine glycans are attached at residues N273 and N321. Catalysis depends on H374, which acts as the Charge relay system.

This sequence belongs to the AB hydrolase superfamily. Lipase family. Monomer. Post-translationally, glycosylation is not essential for catalytic activity. In terms of tissue distribution, most abundantly expressed in brain, lung, kidney and mammary gland, a moderate expression seen in placenta and expressed at low levels in the liver and heart.

The protein localises to the lysosome. It catalyses the reaction a sterol ester + H2O = a sterol + a fatty acid + H(+). The catalysed reaction is cholesteryl (9Z-octadecenoate) + H2O = cholesterol + (9Z)-octadecenoate + H(+). The enzyme catalyses a triacylglycerol + H2O = a 1,2-diacylglycerol + a fatty acid + H(+). It carries out the reaction 1,2-di-(9Z-octadecenoyl)-glycerol + (9Z)-octadecenoate + H(+) = 1,2,3-tri-(9Z-octadecenoyl)-glycerol + H2O. It catalyses the reaction a 1,2-diacylglycerol + H2O = a 1-acylglycerol + a fatty acid + H(+). The catalysed reaction is 1,2-di-(9Z-octadecenoyl)-glycerol + H2O = 1-(9Z-octadecenoyl)-glycerol + (9Z)-octadecenoate + H(+). The enzyme catalyses a 1,3-diacylglycerol + H2O = a 1-acylglycerol + a fatty acid + H(+). It carries out the reaction 1,3-di-(9Z-octadecenoyl)-glycerol + H2O = 1-(9Z-octadecenoyl)-glycerol + (9Z)-octadecenoate + H(+). Its function is as follows. Catalyzes the deacylation of cholesteryl ester core lipids of endocytosed low density lipoproteins to generate free fatty acids and cholesterol. Hydrolyzes triglycerides (1,2,3-triacylglycerol) and diglycerides (such as 1,2-diacylglycerol and 1,3-diacylglycerol) with preference for the acyl moieties at the sn-1 or sn-3 positions. In Homo sapiens (Human), this protein is Lysosomal acid lipase/cholesteryl ester hydrolase (LIPA).